Here is a 373-residue protein sequence, read N- to C-terminus: Saccharopine dehydrogenase [NAD(+), L-lysine-forming] (373 aa).

Residue Ala2 is modified to N-acetylalanine; partial. L-saccharopine-binding residues include Arg18 and Lys77. Catalysis depends on Lys77, which acts as the Proton acceptor. Catalysis depends on His96, which acts as the Proton donor. Position 101 (Gln101) interacts with L-saccharopine. Arg130 contacts NAD(+). L-saccharopine-binding residues include Arg131 and Phe135. NAD(+) is bound by residues 203–204, Asp227, Thr231, Tyr251, and Val278; that span reads GR. Cys205 and Cys249 are joined by a disulfide. 279 to 281 provides a ligand contact to L-saccharopine; it reads SAD. 318–321 provides a ligand contact to NAD(+); the sequence is IDHL. The Microbody targeting signal motif lies at 371-373; sequence SRL.

The protein belongs to the AlaDH/PNT family. Monomer.

It is found in the peroxisome. It carries out the reaction L-saccharopine + NAD(+) + H2O = L-lysine + 2-oxoglutarate + NADH + H(+). Its pathway is amino-acid biosynthesis; L-lysine biosynthesis via AAA pathway; L-lysine from L-alpha-aminoadipate (fungal route): step 3/3. With respect to regulation, inhibited by p-chloromercuribenzoate and iodoacetate by modification of the active site cysteine residue. Inhibited by diethyl pyrocarbonate by modification of histidine residues. Inhibited by pyridoxal 5'-phosphate by modification of an essential lysine residue. Functionally, catalyzes the NAD(+)-dependent cleavage of saccharopine to L-lysine and 2-oxoglutarate, the final step in the alpha-aminoadipate (AAA) pathway for lysine biosynthesis. The polypeptide is Saccharopine dehydrogenase [NAD(+), L-lysine-forming] (Saccharomyces cerevisiae (strain ATCC 204508 / S288c) (Baker's yeast)).